The following is a 412-amino-acid chain: Interferon-inducible GTPase 5 (412 aa).

An IRG-type G domain is found at 51–234 (TRLEVGVTGE…PMLVTTWEHD (184 aa)). GTP is bound by residues 60-67 (ESGAGKSS), 85-89 (TGVVE), and 215-217 (SNL). A phosphoserine mark is found at Ser246 and Ser303.

It belongs to the TRAFAC class dynamin-like GTPase superfamily. IRG family. Interacts with PLIN2/ADRP and COX4I1/COXIV. In terms of tissue distribution, expressed in spermatozoa tails from the testis and epididymis, where it may be a component of the fibrous sheath (at protein level).

Its subcellular location is the cell projection. The protein localises to the cilium. The protein resides in the flagellum. It localises to the lipid droplet. The enzyme catalyses GTP + H2O = GDP + phosphate + H(+). Required for sperm motility and therefore male fertility, via positive regulation of spermatozoa fibrous sheath formation. This is Interferon-inducible GTPase 5 from Mus musculus (Mouse).